The sequence spans 197 residues: Xanthine phosphoribosyltransferase (197 aa).

Leu-20 and Thr-27 together coordinate xanthine. 128 to 132 (ANGQA) contributes to the 5-phospho-alpha-D-ribose 1-diphosphate binding site. A xanthine-binding site is contributed by Lys-156.

The protein belongs to the purine/pyrimidine phosphoribosyltransferase family. Xpt subfamily. In terms of assembly, homodimer.

It localises to the cytoplasm. The catalysed reaction is XMP + diphosphate = xanthine + 5-phospho-alpha-D-ribose 1-diphosphate. It functions in the pathway purine metabolism; XMP biosynthesis via salvage pathway; XMP from xanthine: step 1/1. Its function is as follows. Converts the preformed base xanthine, a product of nucleic acid breakdown, to xanthosine 5'-monophosphate (XMP), so it can be reused for RNA or DNA synthesis. This is Xanthine phosphoribosyltransferase from Lactococcus lactis subsp. cremoris (strain MG1363).